The primary structure comprises 903 residues: MSQDDAEVASGVVLEELSSWSEEMCRRELPSVLPRLLSMYQCSESWIEHIRILKIIVEMFLPHMNHLTLEETLFSQVLPKSIKLFDGMICELTSEARELSSQNLEIQVTIRNILQAMVQVIGGFTGCVRHVCATQKSVFLGSIQSLPSFILHIIKSAFVHCKNSECVYSGRLHLVSDLLQVLFKEAYSLQKQLMGLLDTVCLDPSVDENNALIMVGVIHSLLDICSVISGMDQAFHANTWKFIIKQSLKHHSVIKSQLRHKEIISSLCEDILFSFHSCLQLAEQITQPAAQGNADYRLFQKTLKLCRFFANSLLHYTKECLPFLSDSCCTLHQLYLQIHSKFLSLCAAKTSKAQQEEIASTFLVLLDPLISQLLKSQPFVQAVLASKLALPCELQLPQVLLLVVAMDKLPSQPQDVQTLWSTEDMTRMSILKGIFYNFGQCSGELSLPTHLQGTKGKGQAEVPVTLYQHVCVHLCAFVASFHSSLFPRLDAALLNAVLSTNMSTSLLAMDVWCFLARYGTAKLGAHHVTLVAHLVKSCPGKCVQLTNLSILLKRLLFFMAAPHQVQFIQKFSPKEADNLHLWQYISLQAFDADLRKPVACELVRVCRAQCRKWLSSTRTLAELDSLNTALSVVLTVCNSAGEALDSRQLTAVTEVLGELWTFINVEQIISQPYVQQAFSLLLQLLAFFIQTVDLQLISQVVNVLTSVIKLEPPDHVSLAVLDFISSLGKLYISQTIRDKVLPSLSCILTSLIVNKNWLLEQHTLEAFTQFAEGTKHEEIVPQCLGSEEIKNKVVSFLEKTESVDEAEVATVDNVKQEKGTFWEPAAKVTVEEVKTSAFQPHTKRARRVLPFEEEYRSVFKAAARALETTEFLLKHSLAPAWLLPELEALQGRIEKLKRCVLTG.

Phosphoserine occurs at positions 101 and 795. Lysine 843 carries the post-translational modification N6-acetyllysine.

In terms of assembly, interacts (via its N-terminal region) with PLK1; controls PLK1 kinase activity. Interacts (via the KVVXF motif) with PPP1CC; controls PLK1 kinase activity. Interacts with FIGNL1; may regulate homologous recombination. In terms of processing, phosphorylation at Ser-101 by PLK1 strengthens FIRRM-PLK1 interaction. Phosphorylation at Ser-795 by PLK1 negatively regulates its interaction with PPP1CC.

The protein localises to the chromosome. It is found in the centromere. It localises to the kinetochore. The protein resides in the nucleus. Its subcellular location is the midbody. The protein localises to the cytoplasm. It is found in the cytoskeleton. It localises to the spindle. Functionally, regulates PLK1 kinase activity at kinetochores and promotes faithful chromosome segregation in prometaphase by bridging kinase and phosphatase activities. Phosphorylation of FIRRM by PLK1 negatively regulates its interaction with the phosphatase, PPP1CC, thus creating a negative feedback loop for maintaining proper PLK1 kinase activity during mitosis. In complex with FIGL1 may regulate homologous recombination. In Mus musculus (Mouse), this protein is FIGNL1-interacting regulator of recombination and mitosis.